Here is a 274-residue protein sequence, read N- to C-terminus: Endonuclease 8-like L720 (274 aa).

The segment at 241-274 (RIYRKSLCPLGHKTIRKKIGLRNRMTTWCPVCQL) adopts an FPG-type; degenerate zinc-finger fold.

This sequence belongs to the FPG family.

This is Endonuclease 8-like L720 from Acanthamoeba polyphaga mimivirus (APMV).